A 255-amino-acid chain; its full sequence is Ribosome maturation factor RimP (255 aa).

The disordered stretch occupies residues 177–255 (LRRGSAPPQD…ARLKNRDTLH (79 aa)). Over residues 186–202 (DGEDVDEEAGEAPEDEV) the composition is skewed to acidic residues. Over residues 216-230 (PKMDKKSDKKSDKPV) the composition is skewed to basic and acidic residues.

It belongs to the RimP family.

It is found in the cytoplasm. In terms of biological role, required for maturation of 30S ribosomal subunits. The chain is Ribosome maturation factor RimP from Methylorubrum populi (strain ATCC BAA-705 / NCIMB 13946 / BJ001) (Methylobacterium populi).